The following is a 327-amino-acid chain: Plastid lipid-associated protein 1, chloroplastic (327 aa).

A chloroplast-targeting transit peptide spans 1 to 84 (MATTVPLFSQ…WGPEIGLNSS (84 aa)). The disordered stretch occupies residues 56 to 78 (VNDEWGPDSKGRGGDVDDEWGPE). Residues 85-107 (VAEKVAEEAIESAEETERLKRVL) adopt a coiled-coil conformation.

This sequence belongs to the PAP/fibrillin family. In terms of tissue distribution, expressed in anthers, sepals seeds, fruit coats, and leaves. Very low in petals and pistils and not detected in roots.

The protein resides in the plastid. Its subcellular location is the chloroplast. Functionally, may modulate the action of carotenoids. This is Plastid lipid-associated protein 1, chloroplastic (PAP1) from Brassica campestris (Field mustard).